The primary structure comprises 215 residues: Small ribosomal subunit protein uS2 (215 aa).

This sequence belongs to the universal ribosomal protein uS2 family.

This is Small ribosomal subunit protein uS2 from Caldivirga maquilingensis (strain ATCC 700844 / DSM 13496 / JCM 10307 / IC-167).